The sequence spans 428 residues: Chaperone SurA (428 aa).

Positions 1-19 (MNIWKTLLLGMLVTGSAVS) are cleaved as a signal peptide. PpiC domains lie at 170–268 (SVEY…KIED) and 277–377 (VTEV…EVLD).

It is found in the periplasm. The catalysed reaction is [protein]-peptidylproline (omega=180) = [protein]-peptidylproline (omega=0). Its function is as follows. Chaperone involved in the correct folding and assembly of outer membrane proteins. Recognizes specific patterns of aromatic residues and the orientation of their side chains, which are found more frequently in integral outer membrane proteins. May act in both early periplasmic and late outer membrane-associated steps of protein maturation. The sequence is that of Chaperone SurA from Vibrio vulnificus (strain CMCP6).